The chain runs to 357 residues: Uroporphyrinogen decarboxylase (357 aa).

Residues 30–34 (RQAGR), aspartate 79, tyrosine 154, serine 209, and histidine 336 contribute to the substrate site.

This sequence belongs to the uroporphyrinogen decarboxylase family. As to quaternary structure, homodimer.

The protein localises to the cytoplasm. It carries out the reaction uroporphyrinogen III + 4 H(+) = coproporphyrinogen III + 4 CO2. The protein operates within porphyrin-containing compound metabolism; protoporphyrin-IX biosynthesis; coproporphyrinogen-III from 5-aminolevulinate: step 4/4. Functionally, catalyzes the decarboxylation of four acetate groups of uroporphyrinogen-III to yield coproporphyrinogen-III. This Mycobacterium leprae (strain Br4923) protein is Uroporphyrinogen decarboxylase.